Here is a 350-residue protein sequence, read N- to C-terminus: Sterol-4-alpha-carboxylate 3-dehydrogenase ERG26, decarboxylating (350 aa).

Residues Gly12–Gly18, Asp63–Leu64, and Ser85–Ser87 each bind NADP(+). Ser125 and Tyr152 together coordinate substrate. NADP(+) is bound by residues Tyr152, Lys156, and Pro179–Ile182. Catalysis depends on Lys156, which acts as the Proton donor.

This sequence belongs to the 3-beta-HSD family. Heterotetramer of ERG25, ERG26, ERG27 and ERG28. ERG28 acts as a scaffold to tether ERG27 and other 4,4-demethylation-related enzymes, forming a demethylation enzyme complex, in the endoplasmic reticulum.

The protein localises to the endoplasmic reticulum membrane. The catalysed reaction is 4beta-methylzymosterol-4alpha-carboxylate + NADP(+) = 3-dehydro-4-methylzymosterol + CO2 + NADPH. It functions in the pathway steroid biosynthesis; zymosterol biosynthesis; zymosterol from lanosterol: step 4/6. Sterol-4-alpha-carboxylate 3-dehydrogenase; part of the third module of ergosterol biosynthesis pathway that includes the late steps of the pathway. ERG26 is a catalytic component of the C-4 demethylation complex that catalyzes the oxidative decarboxylation that results in a reduction of the 3-beta-hydroxy group at the C-3 carbon to an oxo group. The third module or late pathway involves the ergosterol synthesis itself through consecutive reactions that mainly occur in the endoplasmic reticulum (ER) membrane. Firstly, the squalene synthase ERG9 catalyzes the condensation of 2 farnesyl pyrophosphate moieties to form squalene, which is the precursor of all steroids. Squalene synthase is crucial for balancing the incorporation of farnesyl diphosphate (FPP) into sterol and nonsterol isoprene synthesis. Secondly, the squalene epoxidase ERG1 catalyzes the stereospecific oxidation of squalene to (S)-2,3-epoxysqualene, which is considered to be a rate-limiting enzyme in steroid biosynthesis. Then, the lanosterol synthase ERG7 catalyzes the cyclization of (S)-2,3 oxidosqualene to lanosterol, a reaction that forms the sterol core. In the next steps, lanosterol is transformed to zymosterol through a complex process involving various demethylation, reduction and desaturation reactions. The lanosterol 14-alpha-demethylase ERG11 (also known as CYP51) catalyzes C14-demethylation of lanosterol to produce 4,4'-dimethyl cholesta-8,14,24-triene-3-beta-ol, which is critical for ergosterol biosynthesis. The C-14 reductase ERG24 reduces the C14=C15 double bond of 4,4-dimethyl-cholesta-8,14,24-trienol to produce 4,4-dimethyl-cholesta-8,24-dienol. 4,4-dimethyl-cholesta-8,24-dienol is substrate of the C-4 demethylation complex ERG25-ERG26-ERG27 in which ERG25 catalyzes the three-step monooxygenation required for the demethylation of 4,4-dimethyl and 4alpha-methylsterols, ERG26 catalyzes the oxidative decarboxylation that results in a reduction of the 3-beta-hydroxy group at the C-3 carbon to an oxo group, and ERG27 is responsible for the reduction of the keto group on the C-3. ERG28 has a role as a scaffold to help anchor ERG25, ERG26 and ERG27 to the endoplasmic reticulum and ERG29 regulates the activity of the iron-containing C4-methylsterol oxidase ERG25. Then, the sterol 24-C-methyltransferase ERG6 catalyzes the methyl transfer from S-adenosyl-methionine to the C-24 of zymosterol to form fecosterol. The C-8 sterol isomerase ERG2 catalyzes the reaction which results in unsaturation at C-7 in the B ring of sterols and thus converts fecosterol to episterol. The sterol-C5-desaturase ERG3 then catalyzes the introduction of a C-5 double bond in the B ring to produce 5-dehydroepisterol. The C-22 sterol desaturase ERG5 further converts 5-dehydroepisterol into ergosta-5,7,22,24(28)-tetraen-3beta-ol by forming the C-22(23) double bond in the sterol side chain. Finally, ergosta-5,7,22,24(28)-tetraen-3beta-ol is substrate of the C-24(28) sterol reductase ERG4 to produce ergosterol. The chain is Sterol-4-alpha-carboxylate 3-dehydrogenase ERG26, decarboxylating from Candida albicans (strain SC5314 / ATCC MYA-2876) (Yeast).